The following is a 364-amino-acid chain: 3-isopropylmalate dehydrogenase (364 aa).

78-89 (GPKWGTGAVRPE) contacts NAD(+). Substrate contacts are provided by R96, R106, R135, and D224. Mg(2+) is bound by residues D224, D249, and D253. 288 to 299 (GSAPDLPANKVN) contacts NAD(+).

Belongs to the isocitrate and isopropylmalate dehydrogenases family. As to quaternary structure, homodimer. Mg(2+) is required as a cofactor. Requires Mn(2+) as cofactor.

Its subcellular location is the cytoplasm. The enzyme catalyses (2R,3S)-3-isopropylmalate + NAD(+) = 4-methyl-2-oxopentanoate + CO2 + NADH. Its pathway is amino-acid biosynthesis; L-leucine biosynthesis; L-leucine from 3-methyl-2-oxobutanoate: step 3/4. Its function is as follows. Catalyzes the oxidation of 3-carboxy-2-hydroxy-4-methylpentanoate (3-isopropylmalate) to 3-carboxy-4-methyl-2-oxopentanoate. The product decarboxylates to 4-methyl-2 oxopentanoate. This is 3-isopropylmalate dehydrogenase (LEU2) from Wickerhamomyces anomalus (strain ATCC 8168 / CBS 5759 / DSM 6766 / JCM 3585 / IAM 12210 / NCYC 432 / NBRC 10213 / NRRL Y-366 / AJ 5027) (Yeast).